The chain runs to 100 residues: A-type ATP synthase subunit F (100 aa).

It belongs to the V-ATPase F subunit family. Has multiple subunits with at least A(3), B(3), C, D, E, F, H, I and proteolipid K(x).

It localises to the cell membrane. Functionally, component of the A-type ATP synthase that produces ATP from ADP in the presence of a proton gradient across the membrane. The chain is A-type ATP synthase subunit F from Methanoregula boonei (strain DSM 21154 / JCM 14090 / 6A8).